An 88-amino-acid chain; its full sequence is UPF0297 protein Cphy_2298 (88 aa).

The protein belongs to the UPF0297 family.

This is UPF0297 protein Cphy_2298 from Lachnoclostridium phytofermentans (strain ATCC 700394 / DSM 18823 / ISDg) (Clostridium phytofermentans).